The primary structure comprises 235 residues: Proteasome subunit alpha (235 aa).

Belongs to the peptidase T1A family. As to quaternary structure, the 20S proteasome core is composed of 14 alpha and 14 beta subunits that assemble into four stacked heptameric rings, resulting in a barrel-shaped structure. The two inner rings, each composed of seven catalytic beta subunits, are sandwiched by two outer rings, each composed of seven alpha subunits. The catalytic chamber with the active sites is on the inside of the barrel. Has a gated structure, the ends of the cylinder being occluded by the N-termini of the alpha-subunits. Is capped by the proteasome-associated ATPase, ARC.

The protein localises to the cytoplasm. It functions in the pathway protein degradation; proteasomal Pup-dependent pathway. The formation of the proteasomal ATPase ARC-20S proteasome complex, likely via the docking of the C-termini of ARC into the intersubunit pockets in the alpha-rings, may trigger opening of the gate for substrate entry. Interconversion between the open-gate and close-gate conformations leads to a dynamic regulation of the 20S proteasome proteolysis activity. Functionally, component of the proteasome core, a large protease complex with broad specificity involved in protein degradation. The sequence is that of Proteasome subunit alpha from Arthrobacter sp. (strain FB24).